The following is a 430-amino-acid chain: Probable acetate kinase (430 aa).

N12 contacts Mg(2+). An ATP-binding site is contributed by K19. Position 100 (R100) interacts with substrate. D159 acts as the Proton donor/acceptor in catalysis. Position 220–224 (220–224 (HLGSG)) interacts with ATP. E416 serves as a coordination point for Mg(2+).

This sequence belongs to the acetokinase family. Requires Mg(2+) as cofactor.

It carries out the reaction acetate + ATP = acetyl phosphate + ADP. It functions in the pathway metabolic intermediate biosynthesis; acetyl-CoA biosynthesis; acetyl-CoA from acetate: step 1/2. The sequence is that of Probable acetate kinase from Cryptococcus neoformans var. neoformans serotype D (strain B-3501A) (Filobasidiella neoformans).